Consider the following 309-residue polypeptide: MSSFEDKKTTGITFNIQKYSVHDGPGIRTVVFLKGCPLRCRWCSNPESQRRRIELAYNTGRCLTLTKCVRCVEVCTMNAITRADDDTISIDRALCEECGMFCAEACPSKALITYGTTRTVDEVLNVVEQDSVFYARSGGGITLSGGEPFAQPAFALALLREARRRHIHTAVETCGYASWSDMEPALEYVKFVHYDIKSLDDEKHRSATGVSNVRIIENLRNIRSRFPALKVVVRTPVIPGFNDTEEDIRAIARLTAELEVEYQLLPYHRLGTQKYTFLDRQAPMGEVVLDEQVMTALNAVVAAEHATDG.

A Radical SAM core domain is found at 22–309 (HDGPGIRTVV…VVAAEHATDG (288 aa)). C36, C40, C43, C62, C68, C71, C75, C95, C98, C102, and C106 together coordinate [4Fe-4S] cluster. 42 to 44 (WCS) serves as a coordination point for S-adenosyl-L-methionine. 2 4Fe-4S ferredoxin-type domains span residues 53–85 (IELA…RADD) and 86–117 (DTIS…YGTT). S-adenosyl-L-methionine contacts are provided by residues G146, 195–197 (DIK), and H268.

It belongs to the organic radical-activating enzymes family. Monomer. Requires [4Fe-4S] cluster as cofactor.

It carries out the reaction glycyl-[protein] + reduced [flavodoxin] + S-adenosyl-L-methionine = glycin-2-yl radical-[protein] + semiquinone [flavodoxin] + 5'-deoxyadenosine + L-methionine + H(+). It functions in the pathway organosulfur degradation; alkanesulfonate degradation. Involved in an anaerobic respiration pathway that converts the sulfonate isethionate (2-hydroxyethanesulfonate) to ammonia, acetate and sulfide. Catalyzes activation of the isethionate sulfite-lyase IslA under anaerobic conditions by generation of an organic free radical on a glycine residue, via a homolytic cleavage of S-adenosyl-L-methionine (SAM). The polypeptide is Isethionate sulfite-lyase activating enzyme (Oleidesulfovibrio alaskensis (strain ATCC BAA-1058 / DSM 17464 / G20) (Desulfovibrio alaskensis)).